A 604-amino-acid polypeptide reads, in one-letter code: Glucose-methanol-choline family oxidoreductase mfmG (604 aa).

The signal sequence occupies residues Met1–Ala24. Asn32 is a glycosylation site (N-linked (GlcNAc...) asparagine). FAD contacts are provided by residues Thr44–Ala45 and Glu65–Ala66. 2 N-linked (GlcNAc...) asparagine glycosylation sites follow: Asn76 and Asn97. Asn126–Ala129 serves as a coordination point for FAD. Residues Asn260, Asn265, Asn401, and Asn460 are each glycosylated (N-linked (GlcNAc...) asparagine). Catalysis depends on His538, which acts as the Proton acceptor. FAD-binding positions include Ala572 and Pro584–Gln585.

This sequence belongs to the GMC oxidoreductase family. In terms of assembly, homodimer. The cofactor is FAD.

Functionally, oxidoreductase; part of the gene cluster that mediates the biosynthesis of the phthalide-terpenoid hybrid 11'-O-desmethylfendlerol. MfmG seems not to be involved directly in the biosynthesis of 11'-O-desmethylfendlerol and its role has still to be determined. The biosynthesis of 11'-O-desmethylfendlerol begins with the NR-PKS mfmB that forms 3,5-dimethylorsellinic acid (DMOA), which is then transformed into the phthalide 5,7-dihydroxy-4-(hydroxymethyl)-6-methylphthalide by the cytochrome P450 monooxygenase mfmA and the hydrolase mfmC. Subsequently, the methyltransferase mfmE catalyzes 7-O-methylation to yield 5-hydroxy-4-(hydroxymethyl)-7-methoxy-6-methylphthalide, which undergoes C-3 hydroxylation by the cytochrome P450 monooxygenase mfmF. The resultant cyclopolic acid (2,5-dihydroxy-4-(hydroxymethyl)-7-methoxy-6-methylphthalide) is then farnesylated by the DMATS-type prenyltransferase mfmD to afford 5-O-farnesylcyclopolic acid. Finally, the Pyr4-family terpene cyclase mfmH cyclizes the farnesyl moiety of 5-O-farnesylcyclopolic acid into a drimane-like structure, thus completing the biosynthesis of 11'-O-desmethylfendlerol. The protein is Glucose-methanol-choline family oxidoreductase mfmG of Annulohypoxylon moriforme (Filamentous fungus).